We begin with the raw amino-acid sequence, 551 residues long: E-selectin (551 aa).

An N-terminal signal peptide occupies residues 1 to 23 (MVASWLLSTLTFALVLLIKETST). A C-type lectin domain is found at 24–141 (WTYHFSAENM…CSKKKLALCY (118 aa)). The Extracellular segment spans residues 24–495 (WTYHFSAENM…CEEPIASNVP (472 aa)). N-linked (GlcNAc...) asparagine glycosylation is found at Asn32 and Asn45. Cystine bridges form between Cys42–Cys140, Cys113–Cys132, Cys145–Cys156, Cys150–Cys165, Cys167–Cys176, Cys182–Cys226, Cys195–Cys208, Cys212–Cys239, Cys244–Cys288, Cys257–Cys270, Cys274–Cys301, Cys306–Cys351, Cys337–Cys364, Cys369–Cys414, Cys400–Cys427, Cys432–Cys473, and Cys459–Cys486. Ca(2+) is bound by residues Glu103, Asn105, and Glu111. A carbohydrate is bound by residues 103–111 (EPNNKQNNE), 115–120 (EIYIKR), and 128–130 (NDE). The Ca(2+) site is built by Asn128 and Asp129. One can recognise an EGF-like domain in the interval 142-177 (TAACTEASCSGHGECIETINNYSCKCYPGFSGLKCE). Asn162 is a glycosylation site (N-linked (GlcNAc...) asparagine). 5 Sushi domains span residues 180–241 (VTCE…TCKV), 242–303 (VECD…TCKA), 305–366 (SCDT…VCEA), 368–429 (KCDP…SCQV), and 430–488 (VQCP…TCEE). Residues Asn194, Asn201, and Asn205 are each glycosylated (N-linked (GlcNAc...) asparagine). The N-linked (GlcNAc...) asparagine glycan is linked to Asn267. Asn314, Asn321, and Asn334 each carry an N-linked (GlcNAc...) asparagine glycan. N-linked (GlcNAc...) asparagine glycosylation is found at Asn442 and Asn466. Residues 496-517 (LAVGLSVSGTSFLTLTSFLLWF) traverse the membrane as a helical segment. Residues 518 to 551 (LKYFRKKAKKFVPASSRYVGLEAHGNCQVPSHLI) lie on the Cytoplasmic side of the membrane.

It belongs to the selectin/LECAM family. In terms of assembly, interacts with SELPLG/PSGL1 and PODXL2 through the sialyl Lewis X epitope. SELPLG sulfation appears not to be required for this interaction.

The protein resides in the cell membrane. In terms of biological role, cell-surface glycoprotein having a role in immunoadhesion. Mediates in the adhesion of blood neutrophils in cytokine-activated endothelium through interaction with SELPLG/PSGL1. May have a role in capillary morphogenesis. The chain is E-selectin (SELE) from Oryctolagus cuniculus (Rabbit).